The following is a 193-amino-acid chain: Thioredoxin reductase-like selenoprotein T1b (193 aa).

The N-terminal stretch at 1 to 21 is a signal peptide; it reads METRCLYLLLVCVLSVNHATA. A cross-link (cysteinyl-selenocysteine (Cys-Sec)) is located at residues 44–47; that stretch reads CVSU. Position 47 (Sec47) is a non-standard amino acid, selenocysteine.

Belongs to the SelWTH family. Selenoprotein T subfamily. Post-translationally, may contain a selenide-sulfide bond between Cys-44 and Sec-47. This bond is speculated to serve as redox-active pair. As to expression, widely expressed in the embryo. High level in embryonic blood at 24 hours post-fertilization (hpf).

The protein resides in the endoplasmic reticulum membrane. The enzyme catalyses [thioredoxin]-dithiol + NADP(+) = [thioredoxin]-disulfide + NADPH + H(+). Its function is as follows. Selenoprotein with thioredoxin reductase-like oxidoreductase activity. The chain is Thioredoxin reductase-like selenoprotein T1b from Danio rerio (Zebrafish).